The following is an 865-amino-acid chain: Alanine--tRNA ligase (865 aa).

Zn(2+)-binding residues include histidine 556, histidine 560, cysteine 660, and histidine 664.

Belongs to the class-II aminoacyl-tRNA synthetase family. Zn(2+) is required as a cofactor.

The protein resides in the cytoplasm. The enzyme catalyses tRNA(Ala) + L-alanine + ATP = L-alanyl-tRNA(Ala) + AMP + diphosphate. Catalyzes the attachment of alanine to tRNA(Ala) in a two-step reaction: alanine is first activated by ATP to form Ala-AMP and then transferred to the acceptor end of tRNA(Ala). Also edits incorrectly charged Ser-tRNA(Ala) and Gly-tRNA(Ala) via its editing domain. In Vesicomyosocius okutanii subsp. Calyptogena okutanii (strain HA), this protein is Alanine--tRNA ligase.